Here is a 458-residue protein sequence, read N- to C-terminus: MTNYAIILAAGKGTRMKSDLPKVLHQVSGLTMLEHVFRSVAHITPQMNVTVIGHKAELVQEVLKEKSEFVLQTEQLGTGHAVMMAEEKLADLEGNTLVIAGDTPLITGESLKNLIDFHVNHKNVATILTAKAEDPFGYGRIIRNHDDEVVKIVEQKDANEYEQKVKEINTGTYVFDNKRLFEALKNINTNNAQGEYYLTDVISIFRENKEKVGAYVLRDFNESLGVNDRVALATAESVMRRRINKAHMINGVTFQNPDATYIEADVSIAADVMIEANVSLKGNSCIGAKSVLTNGTCIVDAQIGESVVITNSTIEESSIADGVTVGPYAHIRPGSQLDKNVHIGNFVEVKGSHIGENTKAGHLTYIGNAVVGSDVNFGAGTITVNYDGKNKYKTVIGNNVFVGSNSTLIAPLEIGDNALTAAGSTITKNVEPDSIAIGRSRQVIKEGYAKRLPHYPQK.

Residues M1–R229 are pyrophosphorylase. UDP-N-acetyl-alpha-D-glucosamine contacts are provided by residues L8–G11, K22, Q72, and G77–T78. D102 contacts Mg(2+). UDP-N-acetyl-alpha-D-glucosamine contacts are provided by G139, E154, N169, and N227. N227 is a binding site for Mg(2+). The segment at V230–N250 is linker. The N-acetyltransferase stretch occupies residues G251–K458. UDP-N-acetyl-alpha-D-glucosamine is bound by residues R332 and K350. H362 serves as the catalytic Proton acceptor. Residues Y365 and N376 each coordinate UDP-N-acetyl-alpha-D-glucosamine. Acetyl-CoA is bound by residues A379, N385 to Y386, S404, A422, and R439.

It in the N-terminal section; belongs to the N-acetylglucosamine-1-phosphate uridyltransferase family. The protein in the C-terminal section; belongs to the transferase hexapeptide repeat family. In terms of assembly, homotrimer. The cofactor is Mg(2+).

It localises to the cytoplasm. The catalysed reaction is alpha-D-glucosamine 1-phosphate + acetyl-CoA = N-acetyl-alpha-D-glucosamine 1-phosphate + CoA + H(+). The enzyme catalyses N-acetyl-alpha-D-glucosamine 1-phosphate + UTP + H(+) = UDP-N-acetyl-alpha-D-glucosamine + diphosphate. It functions in the pathway nucleotide-sugar biosynthesis; UDP-N-acetyl-alpha-D-glucosamine biosynthesis; N-acetyl-alpha-D-glucosamine 1-phosphate from alpha-D-glucosamine 6-phosphate (route II): step 2/2. Its pathway is nucleotide-sugar biosynthesis; UDP-N-acetyl-alpha-D-glucosamine biosynthesis; UDP-N-acetyl-alpha-D-glucosamine from N-acetyl-alpha-D-glucosamine 1-phosphate: step 1/1. The protein operates within bacterial outer membrane biogenesis; LPS lipid A biosynthesis. In terms of biological role, catalyzes the last two sequential reactions in the de novo biosynthetic pathway for UDP-N-acetylglucosamine (UDP-GlcNAc). The C-terminal domain catalyzes the transfer of acetyl group from acetyl coenzyme A to glucosamine-1-phosphate (GlcN-1-P) to produce N-acetylglucosamine-1-phosphate (GlcNAc-1-P), which is converted into UDP-GlcNAc by the transfer of uridine 5-monophosphate (from uridine 5-triphosphate), a reaction catalyzed by the N-terminal domain. The sequence is that of Bifunctional protein GlmU from Streptococcus uberis (strain ATCC BAA-854 / 0140J).